The sequence spans 522 residues: MKHRTFFSLCAKFGCLLALGACSPKIVDAGAATVPHTLSTLKTADNRPASVYLKKDKPTLIKFWASWCPLCLSELGQTEKWAQDAKFSSANLITVASPGFLHEKKDGDFQKWYAGLNYPKLPVVTDNGGTIAQSLNISVYPSWALIGKDGDVQRIVKGSINEAQALALIRDPNADLGSLKHSFYKPDTQKKDSKIMNTRTIYLAGGCFWGLEAYFQRIDGVVDAVSGYANGNTKNPSYEDVSYRHTGHAETVKVTYDADKLSLDDILQYFFRVVDPTSLNKQGNDTGTQYRSGVYYTDPAEKAVIAAALKREQQKYQLPLVVENEPLKNFYDAEEYHQDYLIKNPNGYCHIDIRKADEPLPGKTKTAPQGKGFDAATYKKPSDAELKRTLTEEQYQVTQNSATEYAFSHEYDHLFKPGIYVDVVSGEPLFSSADKYDSGCGWPSFTRPIDAKSVTEHDDFSYNMRRTEVRSHAADSHLGHVFPDGPRDKGGLRYCINGASLKFIPLEQMDAAGYGALKSKVK.

The 158-residue stretch at 17 to 174 (LALGACSPKI…ALALIRDPNA (158 aa)) folds into the Thioredoxin domain. C68 and C71 are joined by a disulfide. The segment at 199–354 (RTIYLAGGCF…PNGYCHIDIR (156 aa)) is peptide methionine sulfoxide reductase A. C207 is a catalytic residue. One can recognise a MsrB domain in the interval 383-506 (DAELKRTLTE…NGASLKFIPL (124 aa)). A disulfide bridge links C440 with C495. C495 (nucleophile) is an active-site residue.

The protein in the N-terminal section; belongs to the thioredoxin family. It in the central section; belongs to the MsrA Met sulfoxide reductase family. This sequence in the C-terminal section; belongs to the MsrB Met sulfoxide reductase family.

The catalysed reaction is L-methionyl-[protein] + [thioredoxin]-disulfide + H2O = L-methionyl-(S)-S-oxide-[protein] + [thioredoxin]-dithiol. It catalyses the reaction [thioredoxin]-disulfide + L-methionine + H2O = L-methionine (S)-S-oxide + [thioredoxin]-dithiol. The enzyme catalyses L-methionyl-[protein] + [thioredoxin]-disulfide + H2O = L-methionyl-(R)-S-oxide-[protein] + [thioredoxin]-dithiol. Has an important function as a repair enzyme for proteins that have been inactivated by oxidation. Catalyzes the reversible oxidation-reduction of methionine sulfoxide in proteins to methionine. The chain is Peptide methionine sulfoxide reductase MsrA/MsrB (msrAB) from Neisseria meningitidis serogroup A / serotype 4A (strain DSM 15465 / Z2491).